Reading from the N-terminus, the 275-residue chain is Low affinity immunoglobulin gamma Fc region receptor III-A (275 aa).

The N-terminal stretch at 1–23 is a signal peptide; it reads MSVWTSRKAAEDNDTSLSSGIRA. The Extracellular portion of the chain corresponds to 24–207; it reads GLQKAVVTLH…SPSTFPPWHQ (184 aa). Ig-like C2-type domains follow at residues 28-92 and 101-192; these read AVVT…YTCQ and PVNL…LRIT. 2 cysteine pairs are disulfide-bonded: C49–C91 and C131–C175. N-linked (GlcNAc...) asparagine glycosylation is found at N65, N168, and N183. The chain crosses the membrane as a helical span at residues 208-228; the sequence is ITFCLLIGLLFTIDTVMYFSV. Topologically, residues 229–275 are cytoplasmic; the sequence is QKGLRRSTADYEEPEVHWSKEPENKTISEEKQSFRSSRANSETPENR. Positions 237–275 are disordered; that stretch reads ADYEEPEVHWSKEPENKTISEEKQSFRSSRANSETPENR. Position 239 is a phosphotyrosine (Y239). The span at 242–261 shows a compositional bias: basic and acidic residues; the sequence is PEVHWSKEPENKTISEEKQS. The segment covering 262–275 has biased composition (polar residues); it reads FRSSRANSETPENR.

Forms a heterooligomeric complex with ITAM-containing signaling subunits FCER1G. Interacts (via transmembrane domain) with signaling subunits; this interaction is a prerequisite for receptor complex expression on the cell surface and intracellular signal transduction. Binds the Fc region of antigen-complexed IgG. In terms of processing, N-glycosylated. Phosphorylated following receptor ligation.

It is found in the cell membrane. In terms of biological role, receptor for the invariable Fc fragment of immunoglobulin gamma (IgG). Binds with intermediate affinity to both IgG2a and IgG2b. Can bind to IgG2a and IgG2b monomers. Does not display binding to IgG1 or IgG3. Recognizes neutralizing virus-specific IgGs displayed on the cell surface of infected cells and triggers antibody-dependent cellular cytotoxicity (ADCC). Confers protection to lethal influenza virus infection. On splenic dendritic cells, uptakes antigen immune complexes and efficiently divert them into MHC class I and II antigen presentation pathways to provide for superior priming of CD4-positive and CD8-positive T cell immune responses. Mediates neutrophil activation by IgG complexes redundantly with FCGR2A. Plays a role in promoting bone resorption by enhancing osteoclast differentiation following binding to IgG2a. Also acts as a receptor for the Fc region of immunoglobulin epsilon (IgE). Binds with low affinity to both the a and b allotypes of IgE. Has also been shown to bind to IgE allotype a only but not to allotype b. Binds aggregated IgE but not the monomeric form and bound monomeric IgG is readily displaced by IgE complexes. Binding to IgE promotes macrophage-mediated phagocytosis, antigen presentation to T cells, production of pro-inflammatory cytokines and the late phase of cutaneous allergic reactions. Mediates enhanced ADCC in response to afucosylated IgGs. The polypeptide is Low affinity immunoglobulin gamma Fc region receptor III-A (Cricetulus griseus (Chinese hamster)).